The chain runs to 416 residues: UDP-N-acetylglucosamine 1-carboxyvinyltransferase (416 aa).

Position 22 to 23 (22 to 23 (KN)) interacts with phosphoenolpyruvate. R91 is a UDP-N-acetyl-alpha-D-glucosamine binding site. Residue C115 is the Proton donor of the active site. At C115 the chain carries 2-(S-cysteinyl)pyruvic acid O-phosphothioketal. Residues 120–124 (RPVDL), D303, and I325 each bind UDP-N-acetyl-alpha-D-glucosamine.

The protein belongs to the EPSP synthase family. MurA subfamily.

It localises to the cytoplasm. It carries out the reaction phosphoenolpyruvate + UDP-N-acetyl-alpha-D-glucosamine = UDP-N-acetyl-3-O-(1-carboxyvinyl)-alpha-D-glucosamine + phosphate. Its pathway is cell wall biogenesis; peptidoglycan biosynthesis. Its function is as follows. Cell wall formation. Adds enolpyruvyl to UDP-N-acetylglucosamine. This chain is UDP-N-acetylglucosamine 1-carboxyvinyltransferase, found in Oleidesulfovibrio alaskensis (strain ATCC BAA-1058 / DSM 17464 / G20) (Desulfovibrio alaskensis).